Reading from the N-terminus, the 121-residue chain is UPF0295 protein BH0952 (121 aa).

The next 2 helical transmembrane spans lie at 12 to 32 and 41 to 61; these read IRTF…IGIF and VLAM…YFWI.

Belongs to the UPF0295 family.

The protein localises to the cell membrane. This is UPF0295 protein BH0952 from Halalkalibacterium halodurans (strain ATCC BAA-125 / DSM 18197 / FERM 7344 / JCM 9153 / C-125) (Bacillus halodurans).